Consider the following 593-residue polypeptide: Aspartate--tRNA ligase (593 aa).

Position 181 (glutamate 181) interacts with L-aspartate. The segment at 205 to 208 is aspartate; it reads QLYK. Arginine 227 contacts L-aspartate. ATP-binding positions include 227–229 and glutamine 236; that span reads RDE. L-aspartate is bound at residue histidine 455. Residue glutamate 489 coordinates ATP. Residue arginine 496 coordinates L-aspartate. 541-544 lines the ATP pocket; sequence GLDR.

Belongs to the class-II aminoacyl-tRNA synthetase family. Type 1 subfamily. As to quaternary structure, homodimer.

The protein localises to the cytoplasm. It carries out the reaction tRNA(Asp) + L-aspartate + ATP = L-aspartyl-tRNA(Asp) + AMP + diphosphate. Catalyzes the attachment of L-aspartate to tRNA(Asp) in a two-step reaction: L-aspartate is first activated by ATP to form Asp-AMP and then transferred to the acceptor end of tRNA(Asp). This chain is Aspartate--tRNA ligase, found in Ruminiclostridium cellulolyticum (strain ATCC 35319 / DSM 5812 / JCM 6584 / H10) (Clostridium cellulolyticum).